A 420-amino-acid chain; its full sequence is Serine--tRNA ligase (420 aa).

An L-serine-binding site is contributed by 229–231 (TAE). 260-262 (RAE) provides a ligand contact to ATP. An L-serine-binding site is contributed by E283. 347–350 (EISS) contributes to the ATP binding site. An L-serine-binding site is contributed by S382.

The protein belongs to the class-II aminoacyl-tRNA synthetase family. Type-1 seryl-tRNA synthetase subfamily. In terms of assembly, homodimer. The tRNA molecule binds across the dimer.

The protein localises to the cytoplasm. The catalysed reaction is tRNA(Ser) + L-serine + ATP = L-seryl-tRNA(Ser) + AMP + diphosphate + H(+). The enzyme catalyses tRNA(Sec) + L-serine + ATP = L-seryl-tRNA(Sec) + AMP + diphosphate + H(+). It functions in the pathway aminoacyl-tRNA biosynthesis; selenocysteinyl-tRNA(Sec) biosynthesis; L-seryl-tRNA(Sec) from L-serine and tRNA(Sec): step 1/1. Functionally, catalyzes the attachment of serine to tRNA(Ser). Is also able to aminoacylate tRNA(Sec) with serine, to form the misacylated tRNA L-seryl-tRNA(Sec), which will be further converted into selenocysteinyl-tRNA(Sec). The chain is Serine--tRNA ligase from Caldicellulosiruptor saccharolyticus (strain ATCC 43494 / DSM 8903 / Tp8T 6331).